A 463-amino-acid polypeptide reads, in one-letter code: Lipase 6 (463 aa).

Positions 1–16 are cleaved as a signal peptide; that stretch reads MRDLILFLSLLHTIFA. Cys112 and Cys285 are joined by a disulfide. Ser196 serves as the catalytic Charge relay system. A glycan (N-linked (GlcNAc...) asparagine) is linked at Asn231. Active-site charge relay system residues include Asp348 and His381. A disulfide bridge links Cys364 with Cys409. The N-linked (GlcNAc...) asparagine glycan is linked to Asn422.

The protein belongs to the AB hydrolase superfamily. Lipase family. Class Lip subfamily.

It is found in the secreted. The catalysed reaction is a triacylglycerol + H2O = a diacylglycerol + a fatty acid + H(+). Functionally, secreted lipase that is able to hydrolyze both the neutral triacylglycerols and the monopalmitate ester Tween 40, allowing the use of hydrolyzed products as carbon sources. Has broad lipolytic activity, which may be important for colonization and subsequent infection, therefore contributing to the persistence and virulence in human tissue. The polypeptide is Lipase 6 (Candida albicans (strain SC5314 / ATCC MYA-2876) (Yeast)).